The primary structure comprises 264 residues: Thiazole synthase (264 aa).

The Schiff-base intermediate with DXP role is filled by lysine 98. 1-deoxy-D-xylulose 5-phosphate is bound by residues glycine 159, 185-186 (AG), and 207-208 (AS). Residues 243–264 (HFAEASSPPEGRAHLDPERPAF) are disordered. Residues 253-264 (GRAHLDPERPAF) are compositionally biased toward basic and acidic residues.

Belongs to the ThiG family. As to quaternary structure, homotetramer. Forms heterodimers with either ThiH or ThiS.

The protein resides in the cytoplasm. It carries out the reaction [ThiS sulfur-carrier protein]-C-terminal-Gly-aminoethanethioate + 2-iminoacetate + 1-deoxy-D-xylulose 5-phosphate = [ThiS sulfur-carrier protein]-C-terminal Gly-Gly + 2-[(2R,5Z)-2-carboxy-4-methylthiazol-5(2H)-ylidene]ethyl phosphate + 2 H2O + H(+). It functions in the pathway cofactor biosynthesis; thiamine diphosphate biosynthesis. Its function is as follows. Catalyzes the rearrangement of 1-deoxy-D-xylulose 5-phosphate (DXP) to produce the thiazole phosphate moiety of thiamine. Sulfur is provided by the thiocarboxylate moiety of the carrier protein ThiS. In vitro, sulfur can be provided by H(2)S. In Streptomyces avermitilis (strain ATCC 31267 / DSM 46492 / JCM 5070 / NBRC 14893 / NCIMB 12804 / NRRL 8165 / MA-4680), this protein is Thiazole synthase.